Reading from the N-terminus, the 64-residue chain is MASRNKLVVPGVEQALDQFKLEVAQEFGVNLGSDTVARANGSVGGEMTKRLVQQAQSQLNGTTK.

The protein belongs to the alpha/beta-type SASP family.

SASP are bound to spore DNA. They are double-stranded DNA-binding proteins that cause DNA to change to an a-like conformation. They protect the DNA backbone from chemical and enzymatic cleavage and are thus involved in dormant spore's high resistance to UV light. This is Small, acid-soluble spore protein D (sspD) from Bacillus subtilis (strain 168).